A 491-amino-acid polypeptide reads, in one-letter code: UDP-N-acetylmuramate--L-alanine ligase (491 aa).

An ATP-binding site is contributed by Gly-126–Thr-132.

The protein belongs to the MurCDEF family.

The protein resides in the cytoplasm. It carries out the reaction UDP-N-acetyl-alpha-D-muramate + L-alanine + ATP = UDP-N-acetyl-alpha-D-muramoyl-L-alanine + ADP + phosphate + H(+). It participates in cell wall biogenesis; peptidoglycan biosynthesis. Its function is as follows. Cell wall formation. The polypeptide is UDP-N-acetylmuramate--L-alanine ligase (Escherichia coli O7:K1 (strain IAI39 / ExPEC)).